Reading from the N-terminus, the 229-residue chain is Thymidylate kinase (229 aa).

9-16 (GPEGSGKS) is an ATP binding site.

It belongs to the thymidylate kinase family.

It catalyses the reaction dTMP + ATP = dTDP + ADP. Phosphorylation of dTMP to form dTDP in both de novo and salvage pathways of dTTP synthesis. The sequence is that of Thymidylate kinase from Roseiflexus castenholzii (strain DSM 13941 / HLO8).